An 809-amino-acid chain; its full sequence is Lon protease (809 aa).

Residues 42 to 242 (LVIYPLGGRP…KVLTLLKKEL (201 aa)) form the Lon N-terminal domain. Residue 395–402 (GPPGVGKT) participates in ATP binding. A Lon proteolytic domain is found at 629–809 (LTGVGIVTGL…YAEVAKLVFG (181 aa)). Active-site residues include serine 716 and lysine 759.

It belongs to the peptidase S16 family. As to quaternary structure, homohexamer. Organized in a ring with a central cavity.

It is found in the cytoplasm. The catalysed reaction is Hydrolysis of proteins in presence of ATP.. Its function is as follows. ATP-dependent serine protease that mediates the selective degradation of mutant and abnormal proteins as well as certain short-lived regulatory proteins. Required for cellular homeostasis and for survival from DNA damage and developmental changes induced by stress. Degrades polypeptides processively to yield small peptide fragments that are 5 to 10 amino acids long. Binds to DNA in a double-stranded, site-specific manner. The chain is Lon protease from Magnetococcus marinus (strain ATCC BAA-1437 / JCM 17883 / MC-1).